The following is an 84-amino-acid chain: Large ribosomal subunit protein bL27 (84 aa).

The segment at 1 to 21 (MAHKKGGGSTKNGRDSNPQYL) is disordered.

It belongs to the bacterial ribosomal protein bL27 family.

This Chloroherpeton thalassium (strain ATCC 35110 / GB-78) protein is Large ribosomal subunit protein bL27.